Consider the following 61-residue polypeptide: Large ribosomal subunit protein uL30 (61 aa).

It belongs to the universal ribosomal protein uL30 family. In terms of assembly, part of the 50S ribosomal subunit.

The polypeptide is Large ribosomal subunit protein uL30 (Shewanella piezotolerans (strain WP3 / JCM 13877)).